Reading from the N-terminus, the 378-residue chain is Alanine dehydrogenase (378 aa).

Residues Arg15 and Lys74 each coordinate substrate. His95 acts as the Proton donor/acceptor in catalysis. NAD(+) contacts are provided by residues Ser132, 176–177 (VV), Asp196, Ser218, 237–238 (VL), 265–268 (VAID), and 297–300 (VANM). Asp268 functions as the Proton donor/acceptor in the catalytic mechanism.

It belongs to the AlaDH/PNT family. In terms of assembly, homohexamer. Trimer of dimer.

The protein resides in the cytoplasm. It carries out the reaction L-alanine + NAD(+) + H2O = pyruvate + NH4(+) + NADH + H(+). It participates in amino-acid degradation; L-alanine degradation via dehydrogenase pathway; NH(3) and pyruvate from L-alanine: step 1/1. Its function is as follows. Catalyzes the reversible oxidative deamination of L-alanine to pyruvate. Oxidative deamination proceeds through a sequential, ordered ternary-binary mechanism, where NAD(+) binds first followed by L-alanine; the products are released in the order ammonia, pyruvate and NADH. Disruption blocks sporulation probably in stage V; 20-30% sporulation can be restored if the media is supplemented with pyruvate, suggesting lack of pyruvate blocks sporulation. Thus it is a key factor in the assimilation of L-alanine as an energy source via the tricarboxylic acid cycle during sporulation. In Bacillus subtilis (strain 168), this protein is Alanine dehydrogenase.